The primary structure comprises 655 residues: Hemagglutinin-esterase-fusion glycoprotein (655 aa).

The signal sequence occupies residues 1–14 (MFFSLLLVLGLTEA). The interval 15–40 (EKIKICLQKQVNSSFSLHNGFGGNLY) is fusion domain-1. Topologically, residues 15-630 (EKIKICLQKQ…QSDPFYWGSS (616 aa)) are extracellular. Disulfide bonds link Cys20-Cys583, Cys120-Cys165, Cys140-Cys188, Cys210-Cys252, Cys229-Cys316, Cys237-Cys289, and Cys346-Cys352. N-linked (GlcNAc...) asparagine; by host glycans are attached at residues Asn26 and Asn61. 2 esterase domain-1 regions span residues 41–151 (ATEE…IKLN) and 41–158 (ATEE…NIYE). The active-site Nucleophile is Ser71. N-linked (GlcNAc...) asparagine; by host glycosylation is found at Asn144 and Asn189. N-acetyl-9-O-acetylneuraminic acid binding regions lie at residues 151–310 (NFQK…FLLM) and 158–310 (ELAS…FLLM). Esterase domain-2 stretches follow at residues 310 to 364 (MPER…YIGE) and 311 to 365 (PERS…IGEA). Fusion domain-2 regions lie at residues 365–650 (ADDH…SGIA) and 366–651 (DDHH…GIAI). Residues Asp366 and His369 each act as charge relay system in the active site. Residues Asn395, Asn552, and Asn603 are each glycosylated (N-linked (GlcNAc...) asparagine; by host). A helical transmembrane segment spans residues 631–651 (LGLAITATISLAALVISGIAI). Residues 652 to 655 (CRTK) lie on the Cytoplasmic side of the membrane.

Belongs to the influenza viruses hemagglutinin family. In terms of assembly, homotrimer of disulfide-linked HEF1-HEF2. In natural infection, inactive HEF is matured into HEF1 and HEF2 outside the cell by one or more trypsin-like, arginine-specific endoprotease.

The protein localises to the virion membrane. It localises to the host cell membrane. The enzyme catalyses N-acetyl-9-O-acetylneuraminate + H2O = N-acetylneuraminate + acetate + H(+). It carries out the reaction N-acetyl-4-O-acetylneuraminate + H2O = N-acetylneuraminate + acetate + H(+). Binds to the N-acetyl-9-O-acetylneuraminic acid residues on the cell surface, bringing about the attachment of the virus particle to the cell. Plays a major role in the determination of host range restriction and virulence. Class I viral fusion protein. Responsible for penetration of the virus into the cell cytoplasm by mediating the fusion of the membrane of the endocytosed virus particle with the endosomal membrane. Low pH in endosomes induce an irreversible conformational change in HEF2, releasing the fusion hydrophobic peptide. Several trimers are required to form a competent fusion pore. Displays a receptor-destroying activity which is a neuraminidate-O-acetyl esterase. This activity cleaves off any receptor on the cell surface, which would otherwise prevent virions release. These cleavages prevent self-aggregation and ensure the efficient spread of the progeny virus from cell to cell. This is Hemagglutinin-esterase-fusion glycoprotein from Homo sapiens (Human).